The following is a 141-amino-acid chain: Nucleoside diphosphate kinase (141 aa).

Lys11, Phe59, Arg87, Thr93, Arg104, and Asn114 together coordinate ATP. The active-site Pros-phosphohistidine intermediate is His117.

Belongs to the NDK family. In terms of assembly, homotetramer. Requires Mg(2+) as cofactor.

It localises to the cytoplasm. The catalysed reaction is a 2'-deoxyribonucleoside 5'-diphosphate + ATP = a 2'-deoxyribonucleoside 5'-triphosphate + ADP. It carries out the reaction a ribonucleoside 5'-diphosphate + ATP = a ribonucleoside 5'-triphosphate + ADP. Major role in the synthesis of nucleoside triphosphates other than ATP. The ATP gamma phosphate is transferred to the NDP beta phosphate via a ping-pong mechanism, using a phosphorylated active-site intermediate. The protein is Nucleoside diphosphate kinase of Pseudomonas putida (strain W619).